We begin with the raw amino-acid sequence, 159 residues long: NADH-quinone oxidoreductase subunit B (159 aa).

[4Fe-4S] cluster is bound by residues Cys32, Cys33, Cys97, and Cys126.

It belongs to the complex I 20 kDa subunit family. NDH-1 is composed of 14 different subunits. Subunits NuoB, C, D, E, F, and G constitute the peripheral sector of the complex. [4Fe-4S] cluster serves as cofactor.

The protein resides in the cell inner membrane. The enzyme catalyses a quinone + NADH + 5 H(+)(in) = a quinol + NAD(+) + 4 H(+)(out). Functionally, NDH-1 shuttles electrons from NADH, via FMN and iron-sulfur (Fe-S) centers, to quinones in the respiratory chain. The immediate electron acceptor for the enzyme in this species is believed to be ubiquinone. Couples the redox reaction to proton translocation (for every two electrons transferred, four hydrogen ions are translocated across the cytoplasmic membrane), and thus conserves the redox energy in a proton gradient. The chain is NADH-quinone oxidoreductase subunit B from Helicobacter pylori (strain HPAG1).